We begin with the raw amino-acid sequence, 256 residues long: Cell division protein ZipA (256 aa).

The Periplasmic segment spans residues 1 to 6 (MQYGRQ). A helical membrane pass occupies residues 7-27 (ILICIGILTVIILLLYGLLNS). At 28–256 (YWDRTVTFCK…RHVLSANKST (229 aa)) the chain is on the cytoplasmic side.

The protein belongs to the ZipA family. Interacts with FtsZ via their C-terminal domains.

The protein resides in the cell inner membrane. Its function is as follows. Essential cell division protein that stabilizes the FtsZ protofilaments by cross-linking them and that serves as a cytoplasmic membrane anchor for the Z ring. Also required for the recruitment to the septal ring of downstream cell division proteins. This chain is Cell division protein ZipA, found in Baumannia cicadellinicola subsp. Homalodisca coagulata.